Reading from the N-terminus, the 392-residue chain is Aspartate aminotransferase (392 aa).

The L-aspartate site is built by glycine 40, tryptophan 126, and asparagine 176. N6-(pyridoxal phosphate)lysine is present on lysine 239.

This sequence belongs to the class-I pyridoxal-phosphate-dependent aminotransferase family. In terms of assembly, homodimer. It depends on pyridoxal 5'-phosphate as a cofactor.

It localises to the cytoplasm. The enzyme catalyses L-aspartate + 2-oxoglutarate = oxaloacetate + L-glutamate. The sequence is that of Aspartate aminotransferase from Bacillus sp. (strain YM-2).